Reading from the N-terminus, the 92-residue chain is Putative pterin-4-alpha-carbinolamine dehydratase (92 aa).

Belongs to the pterin-4-alpha-carbinolamine dehydratase family.

The enzyme catalyses (4aS,6R)-4a-hydroxy-L-erythro-5,6,7,8-tetrahydrobiopterin = (6R)-L-erythro-6,7-dihydrobiopterin + H2O. This is Putative pterin-4-alpha-carbinolamine dehydratase from Cereibacter sphaeroides (strain ATCC 17023 / DSM 158 / JCM 6121 / CCUG 31486 / LMG 2827 / NBRC 12203 / NCIMB 8253 / ATH 2.4.1.) (Rhodobacter sphaeroides).